We begin with the raw amino-acid sequence, 126 residues long: Histone H2B type 1-M (126 aa).

Residues Met1 to Glu36 are disordered. Pro2 carries the post-translational modification N-acetylproline. Residue Glu3 is modified to ADP-ribosyl glutamic acid. Lys6 bears the N6-(2-hydroxyisobutyryl)lysine; alternate mark. The residue at position 6 (Lys6) is an N6-(beta-hydroxybutyryl)lysine; alternate. Position 6 is an N6-acetyllysine; alternate (Lys6). N6-butyryllysine; alternate is present on Lys6. Lys6 is modified (N6-crotonyllysine; alternate). N6-lactoyllysine; alternate is present on Lys6. A Glycyl lysine isopeptide (Lys-Gly) (interchain with G-Cter in SUMO2); alternate cross-link involves residue Lys6. An ADP-ribosylserine modification is found at Ser7. Lys12 is modified (N6-(beta-hydroxybutyryl)lysine; alternate). 2 positions are modified to N6-acetyllysine; alternate: Lys12 and Lys13. N6-crotonyllysine; alternate occurs at positions 12 and 13. The residue at position 12 (Lys12) is an N6-lactoyllysine; alternate. An N6-(2-hydroxyisobutyryl)lysine; alternate modification is found at Lys13. Ser15 is subject to Phosphoserine; by STK4/MST1. 4 positions are modified to N6-acetyllysine; alternate: Lys16, Lys17, Lys21, and Lys24. Lys16, Lys17, Lys21, and Lys24 each carry N6-crotonyllysine; alternate. N6-lactoyllysine; alternate occurs at positions 16, 17, 21, and 24. Residues Lys17 and Lys21 each carry the N6-(beta-hydroxybutyryl)lysine; alternate modification. Lys17 carries the post-translational modification N6-glutaryllysine; alternate. Lys21 and Lys24 each carry N6-(2-hydroxyisobutyryl)lysine; alternate. An N6-butyryllysine; alternate modification is found at Lys21. Residue Lys21 forms a Glycyl lysine isopeptide (Lys-Gly) (interchain with G-Cter in SUMO2); alternate linkage. Lys25 is subject to N6-(2-hydroxyisobutyryl)lysine. At Lys35 the chain carries N6-(2-hydroxyisobutyryl)lysine; alternate. Lys35 is modified (N6-(beta-hydroxybutyryl)lysine; alternate). Lys35 bears the N6-crotonyllysine; alternate mark. An N6-glutaryllysine; alternate modification is found at Lys35. Lys35 carries the post-translational modification N6-succinyllysine; alternate. Residue Lys35 forms a Glycyl lysine isopeptide (Lys-Gly) (interchain with G-Cter in ubiquitin); alternate linkage. Position 36 is a polyADP-ribosyl glutamic acid (Glu36). Ser37 bears the Phosphoserine; by AMPK mark. N6-(2-hydroxyisobutyryl)lysine; alternate is present on residues Lys44, Lys47, and Lys58. Position 44 is an N6-lactoyllysine; alternate (Lys44). N6-glutaryllysine; alternate occurs at positions 44 and 47. An N6-methyllysine; alternate modification is found at Lys47. N6,N6-dimethyllysine; alternate is present on Lys58. The residue at position 80 (Arg80) is a Dimethylated arginine. Residue Lys86 is modified to N6-(2-hydroxyisobutyryl)lysine; alternate. Lys86 carries the N6-(beta-hydroxybutyryl)lysine; alternate modification. Lys86 is modified (N6-acetyllysine; alternate). Lys86 carries the post-translational modification N6-lactoyllysine; alternate. An N6,N6,N6-trimethyllysine; alternate modification is found at Lys86. 2 positions are modified to omega-N-methylarginine: Arg87 and Arg93. At Lys109 the chain carries N6-(2-hydroxyisobutyryl)lysine; alternate. N6-lactoyllysine; alternate is present on Lys109. Position 109 is an N6-glutaryllysine; alternate (Lys109). N6-methyllysine; alternate is present on Lys109. Ser113 is a glycosylation site (O-linked (GlcNAc) serine). At Thr116 the chain carries Phosphothreonine. 2 positions are modified to N6-(2-hydroxyisobutyryl)lysine; alternate: Lys117 and Lys121. Residues Lys117 and Lys121 each carry the N6-(beta-hydroxybutyryl)lysine; alternate modification. N6-lactoyllysine; alternate occurs at positions 117 and 121. N6-glutaryllysine; alternate occurs at positions 117 and 121. N6-succinyllysine; alternate is present on residues Lys117 and Lys121. Lys117 carries the N6-malonyllysine; alternate modification. Residue Lys117 is modified to N6-methylated lysine; alternate. Lys121 participates in a covalent cross-link: Glycyl lysine isopeptide (Lys-Gly) (interchain with G-Cter in ubiquitin); alternate.

It belongs to the histone H2B family. As to quaternary structure, the nucleosome is a histone octamer containing two molecules each of H2A, H2B, H3 and H4 assembled in one H3-H4 heterotetramer and two H2A-H2B heterodimers. The octamer wraps approximately 147 bp of DNA. Monoubiquitination at Lys-35 (H2BK34Ub) by the MSL1/MSL2 dimer is required for histone H3 'Lys-4' (H3K4me) and 'Lys-79' (H3K79me) methylation and transcription activation at specific gene loci, such as HOXA9 and MEIS1 loci. Similarly, monoubiquitination at Lys-121 (H2BK120Ub) by the RNF20/40 complex gives a specific tag for epigenetic transcriptional activation and is also prerequisite for histone H3 'Lys-4' and 'Lys-79' methylation. It also functions cooperatively with the FACT dimer to stimulate elongation by RNA polymerase II. H2BK120Ub also acts as a regulator of mRNA splicing: deubiquitination by USP49 is required for efficient cotranscriptional splicing of a large set of exons. Post-translationally, phosphorylation at Ser-37 (H2BS36ph) by AMPK in response to stress promotes transcription. Phosphorylated on Ser-15 (H2BS14ph) by STK4/MST1 during apoptosis; which facilitates apoptotic chromatin condensation. Also phosphorylated on Ser-15 in response to DNA double strand breaks (DSBs), and in correlation with somatic hypermutation and immunoglobulin class-switch recombination. In terms of processing, glcNAcylation at Ser-113 promotes monoubiquitination of Lys-121. It fluctuates in response to extracellular glucose, and associates with transcribed genes. ADP-ribosylated by PARP1 or PARP2 on Ser-7 (H2BS6ADPr) in response to DNA damage. H2BS6ADPr promotes recruitment of CHD1L. Mono-ADP-ribosylated on Glu-3 (H2BE2ADPr) by PARP3 in response to single-strand breaks. Poly ADP-ribosylation on Glu-36 (H2BE35ADPr) by PARP1 regulates adipogenesis: it inhibits phosphorylation at Ser-37 (H2BS36ph), thereby blocking expression of pro-adipogenetic genes. Post-translationally, crotonylation (Kcr) is specifically present in male germ cells and marks testis-specific genes in post-meiotic cells, including X-linked genes that escape sex chromosome inactivation in haploid cells. Crotonylation marks active promoters and enhancers and confers resistance to transcriptional repressors. It is also associated with post-meiotically activated genes on autosomes. In terms of processing, lactylated in macrophages by EP300/P300 by using lactoyl-CoA directly derived from endogenous or exogenous lactate, leading to stimulates gene transcription.

Its subcellular location is the nucleus. It localises to the chromosome. In terms of biological role, core component of nucleosome. Nucleosomes wrap and compact DNA into chromatin, limiting DNA accessibility to the cellular machineries which require DNA as a template. Histones thereby play a central role in transcription regulation, DNA repair, DNA replication and chromosomal stability. DNA accessibility is regulated via a complex set of post-translational modifications of histones, also called histone code, and nucleosome remodeling. The protein is Histone H2B type 1-M of Homo sapiens (Human).